The primary structure comprises 218 residues: uncharacterized protein (218 aa).

Residues 11–31 (AAGLFPLALMLSGCISYALVS) traverse the membrane as a helical segment.

The protein localises to the membrane. This is an uncharacterized protein from Escherichia coli (strain K12).